The chain runs to 212 residues: uncharacterized protein (212 aa).

S-adenosyl-L-methionine-binding residues include glycine 53 and glutamate 74.

The protein belongs to the methyltransferase superfamily. YrrT family.

Could be a S-adenosyl-L-methionine-dependent methyltransferase. This is an uncharacterized protein from Exiguobacterium sibiricum (strain DSM 17290 / CCUG 55495 / CIP 109462 / JCM 13490 / 255-15).